The following is a 117-amino-acid chain: Multidrug resistance protein EbrB (117 aa).

4 consecutive transmembrane segments (helical) span residues 3 to 23 (GLLYLALAIVSEVFGSTMLKL), 31 to 51 (WPIAGVIVGFLSAFTFLSFSL), 59 to 79 (AYATWSGVGTALTAIVGFLLF), and 81 to 101 (ETISLKGVFGLTLVIAGVVVL).

The protein belongs to the drug/metabolite transporter (DMT) superfamily. Small multidrug resistance (SMR) (TC 2.A.7.1) family. EbrA/EbrB subfamily. The efflux pump is composed of EbrA and EbrB.

It localises to the cell membrane. Functionally, part of a multidrug efflux pump. Confers resistance to cationic lipophilic dyes such as ethidium bromide, acriflavine, pyronine Y and safranin O. The efflux is probably coupled to an influx of protons. This Bacillus subtilis (strain 168) protein is Multidrug resistance protein EbrB (ebrB).